The chain runs to 300 residues: Hydroxyacyl-thioester dehydratase type 2, mitochondrial (300 aa).

It belongs to the HTD2 family.

The protein resides in the mitochondrion. In terms of biological role, mitochondrial 3-hydroxyacyl-thioester dehydratase involved in fatty acid biosynthesis. Required for respiratory growth and for normal mitochondrial morphology. This chain is Hydroxyacyl-thioester dehydratase type 2, mitochondrial (htd2), found in Schizosaccharomyces pombe (strain 972 / ATCC 24843) (Fission yeast).